The primary structure comprises 841 residues: Homeobox-leucine zipper protein ATHB-9 (841 aa).

The span at 1-18 shows a compositional bias: basic and acidic residues; sequence MMAHHSMDDRDSPDKGFD. The disordered stretch occupies residues 1-21; it reads MMAHHSMDDRDSPDKGFDSGK. Positions 18-81 form a DNA-binding region, homeobox; sequence DSGKYVRYTP…NRRCREKQRK (64 aa). Residues 85 to 118 adopt a coiled-coil conformation; that stretch reads RLQTVNRKLSAMNKLLMEENDRLQKQVSNLVYEN. Disordered regions lie at residues 140–162 and 602–630; these read VVVSGQQRQQQNPTHQHPQRDVN and DQKTNPNDHQSASRTRDLASSLDGSTKTD. Over residues 145 to 155 the composition is skewed to low complexity; the sequence is QQRQQQNPTHQ. The START domain occupies 160–388; that stretch reads DVNNPANLLS…IAQETSGEVQ (229 aa). Positions 603 to 614 are enriched in polar residues; sequence QKTNPNDHQSAS.

The protein belongs to the HD-ZIP homeobox family. Class III subfamily. As to quaternary structure, binds DNA as homodimer. Interacts with ESR1 and ESR2. Interacts with ZPR3.

It is found in the nucleus. Functionally, probable transcription factor involved in the determination of adaxial-abaxial polarity in ovule primordium. Specifies adaxial leaf fates. Binds to the DNA sequence 5'-GTAAT[GC]ATTAC-3'. The protein is Homeobox-leucine zipper protein ATHB-9 (ATHB-9) of Arabidopsis thaliana (Mouse-ear cress).